Reading from the N-terminus, the 23-residue chain is Magainin-R2 (23 aa).

In terms of tissue distribution, expressed by the skin glands.

It localises to the secreted. Functionally, antimicrobial peptide. In Xenopus ruwenzoriensis (Uganda clawed frog), this protein is Magainin-R2.